Reading from the N-terminus, the 1120-residue chain is DNA-directed RNA polymerase subunit beta (1120 aa).

The protein belongs to the RNA polymerase beta chain family. In plastids the minimal PEP RNA polymerase catalytic core is composed of four subunits: alpha, beta, beta', and beta''. When a (nuclear-encoded) sigma factor is associated with the core the holoenzyme is formed, which can initiate transcription.

It localises to the plastid. It is found in the chloroplast. The catalysed reaction is RNA(n) + a ribonucleoside 5'-triphosphate = RNA(n+1) + diphosphate. Its function is as follows. DNA-dependent RNA polymerase catalyzes the transcription of DNA into RNA using the four ribonucleoside triphosphates as substrates. The chain is DNA-directed RNA polymerase subunit beta from Gracilaria tenuistipitata var. liui (Red alga).